The sequence spans 246 residues: NAD-dependent protein deacylase (246 aa).

Residues 1-237 (MSLPYRHVVI…PRLVEEILAA (237 aa)) enclose the Deacetylase sirtuin-type domain. 13–32 (GAGISAESGIQTFRAQDGLW) contributes to the NAD(+) binding site. Residues Tyr-57 and Arg-60 each coordinate substrate. 94-97 (QNID) is a binding site for NAD(+). Residue His-112 is the Proton acceptor of the active site. Zn(2+)-binding residues include Cys-120 and Cys-139. NAD(+)-binding positions include 179-181 (GTS), 205-207 (NLE), and Ala-223.

The protein belongs to the sirtuin family. Class III subfamily. The cofactor is Zn(2+).

Its subcellular location is the cytoplasm. The catalysed reaction is N(6)-acetyl-L-lysyl-[protein] + NAD(+) + H2O = 2''-O-acetyl-ADP-D-ribose + nicotinamide + L-lysyl-[protein]. It carries out the reaction N(6)-succinyl-L-lysyl-[protein] + NAD(+) + H2O = 2''-O-succinyl-ADP-D-ribose + nicotinamide + L-lysyl-[protein]. NAD-dependent lysine deacetylase and desuccinylase that specifically removes acetyl and succinyl groups on target proteins. Modulates the activities of several proteins which are inactive in their acylated form. The sequence is that of NAD-dependent protein deacylase from Vibrio cholerae serotype O1 (strain ATCC 39315 / El Tor Inaba N16961).